The primary structure comprises 382 residues: Queuine tRNA-ribosyltransferase (382 aa).

Aspartate 94 (proton acceptor) is an active-site residue. Substrate is bound by residues 94-98, aspartate 148, glutamine 192, and glycine 219; that span reads DSGGF. Residues 250-256 are RNA binding; that stretch reads GVGKPED. Catalysis depends on aspartate 269, which acts as the Nucleophile. The tract at residues 274 to 278 is RNA binding; important for wobble base 34 recognition; it reads TRNAR. Zn(2+) contacts are provided by cysteine 307, cysteine 309, cysteine 312, and histidine 338.

This sequence belongs to the queuine tRNA-ribosyltransferase family. In terms of assembly, homodimer. Within each dimer, one monomer is responsible for RNA recognition and catalysis, while the other monomer binds to the replacement base PreQ1. Zn(2+) serves as cofactor.

The catalysed reaction is 7-aminomethyl-7-carbaguanine + guanosine(34) in tRNA = 7-aminomethyl-7-carbaguanosine(34) in tRNA + guanine. Its pathway is tRNA modification; tRNA-queuosine biosynthesis. In terms of biological role, catalyzes the base-exchange of a guanine (G) residue with the queuine precursor 7-aminomethyl-7-deazaguanine (PreQ1) at position 34 (anticodon wobble position) in tRNAs with GU(N) anticodons (tRNA-Asp, -Asn, -His and -Tyr). Catalysis occurs through a double-displacement mechanism. The nucleophile active site attacks the C1' of nucleotide 34 to detach the guanine base from the RNA, forming a covalent enzyme-RNA intermediate. The proton acceptor active site deprotonates the incoming PreQ1, allowing a nucleophilic attack on the C1' of the ribose to form the product. After dissociation, two additional enzymatic reactions on the tRNA convert PreQ1 to queuine (Q), resulting in the hypermodified nucleoside queuosine (7-(((4,5-cis-dihydroxy-2-cyclopenten-1-yl)amino)methyl)-7-deazaguanosine). The polypeptide is Queuine tRNA-ribosyltransferase (Haemophilus ducreyi (strain 35000HP / ATCC 700724)).